We begin with the raw amino-acid sequence, 518 residues long: Serine incorporator 4 (518 aa).

The next 10 membrane-spanning stretches (helical) occupy residues 59–79 (CSRL…CLLL), 122–142 (VCAG…HLHS), 153–173 (SFWL…FCIP), 184–204 (IGIC…TAFA), 222–242 (FLAV…GAVL), 259–279 (LLSL…APCI), 286–306 (SGLL…FSAL), 338–357 (ISLA…FACN), 427–447 (AFHF…TNWF), and 470–490 (VASC…PLCW).

Belongs to the TDE1 family.

It localises to the membrane. Functionally, incorporates a polar amino acid serine into membranes and facilitates the synthesis of two serine-derived lipids, phosphatidylserine and sphingolipids. In Homo sapiens (Human), this protein is Serine incorporator 4 (SERINC4).